The following is a 308-amino-acid chain: Oxygen-dependent coproporphyrinogen-III oxidase (308 aa).

Serine 100 lines the substrate pocket. Histidine 104 and histidine 114 together coordinate a divalent metal cation. Histidine 114 functions as the Proton donor in the catalytic mechanism. Substrate is bound at residue 116–118 (NFR). Residues histidine 153 and histidine 183 each contribute to the a divalent metal cation site. The segment at 248–283 (YVEFNLVFDRGTIFGLQSGGRTESILSSMPPMATWK) is important for dimerization. 266 to 268 (GGR) provides a ligand contact to substrate.

It belongs to the aerobic coproporphyrinogen-III oxidase family. As to quaternary structure, homodimer. Requires a divalent metal cation as cofactor.

Its subcellular location is the cytoplasm. It catalyses the reaction coproporphyrinogen III + O2 + 2 H(+) = protoporphyrinogen IX + 2 CO2 + 2 H2O. It participates in porphyrin-containing compound metabolism; protoporphyrin-IX biosynthesis; protoporphyrinogen-IX from coproporphyrinogen-III (O2 route): step 1/1. Functionally, involved in the heme biosynthesis. Catalyzes the aerobic oxidative decarboxylation of propionate groups of rings A and B of coproporphyrinogen-III to yield the vinyl groups in protoporphyrinogen-IX. The protein is Oxygen-dependent coproporphyrinogen-III oxidase of Francisella tularensis subsp. holarctica (strain OSU18).